Consider the following 493-residue polypeptide: Proline--tRNA ligase (493 aa).

It belongs to the class-II aminoacyl-tRNA synthetase family. ProS type 3 subfamily. In terms of assembly, homodimer.

Its subcellular location is the cytoplasm. The enzyme catalyses tRNA(Pro) + L-proline + ATP = L-prolyl-tRNA(Pro) + AMP + diphosphate. In terms of biological role, catalyzes the attachment of proline to tRNA(Pro) in a two-step reaction: proline is first activated by ATP to form Pro-AMP and then transferred to the acceptor end of tRNA(Pro). The sequence is that of Proline--tRNA ligase from Azobacteroides pseudotrichonymphae genomovar. CFP2.